A 474-amino-acid chain; its full sequence is Probable aspartate--tRNA ligase, cytoplasmic (474 aa).

Glu-203 serves as a coordination point for L-aspartate. Residues 225 to 228 (QLYK) form an aspartate region. Arg-247 serves as a coordination point for L-aspartate. ATP is bound by residues 247 to 249 (RAE), 255 to 257 (RYL), and Glu-397. Ser-400 and Arg-404 together coordinate L-aspartate. An ATP-binding site is contributed by 445–448 (GLER).

This sequence belongs to the class-II aminoacyl-tRNA synthetase family. Type 2 subfamily. Homodimer.

Its subcellular location is the cytoplasm. It carries out the reaction tRNA(Asp) + L-aspartate + ATP = L-aspartyl-tRNA(Asp) + AMP + diphosphate. The sequence is that of Probable aspartate--tRNA ligase, cytoplasmic from Enterocytozoon bieneusi (strain H348) (Microsporidian parasite).